Here is a 208-residue protein sequence, read N- to C-terminus: Methylthioribulose-1-phosphate dehydratase (208 aa).

Zn(2+)-binding residues include H98 and H100.

It belongs to the aldolase class II family. MtnB subfamily. The cofactor is Zn(2+).

It carries out the reaction 5-(methylsulfanyl)-D-ribulose 1-phosphate = 5-methylsulfanyl-2,3-dioxopentyl phosphate + H2O. The protein operates within amino-acid biosynthesis; L-methionine biosynthesis via salvage pathway; L-methionine from S-methyl-5-thio-alpha-D-ribose 1-phosphate: step 2/6. In terms of biological role, catalyzes the dehydration of methylthioribulose-1-phosphate (MTRu-1-P) into 2,3-diketo-5-methylthiopentyl-1-phosphate (DK-MTP-1-P). The chain is Methylthioribulose-1-phosphate dehydratase from Marinobacter nauticus (strain ATCC 700491 / DSM 11845 / VT8) (Marinobacter aquaeolei).